The sequence spans 346 residues: D-amino-acid oxidase (346 aa).

The FAD site is built by Gly22, Ile24, Thr52, Thr53, Ser54, Ala58, Ala59, Leu60, and Thr187. Tyr227 and Arg284 together coordinate D-proline. Positions 227 and 284 each coordinate D-serine. FAD contacts are provided by Arg284, Gly311, Gly312, Gly314, and Thr316. Position 284 (Arg284) interacts with D-dopa. Gly312 is a binding site for D-proline. Gly312 is a binding site for D-serine. Gly312 contacts D-dopa. The Microbody targeting signal motif lies at Ser344–Leu346.

This sequence belongs to the DAMOX/DASOX family. The cofactor is FAD.

It is found in the peroxisome matrix. It catalyses the reaction a D-alpha-amino acid + O2 + H2O = a 2-oxocarboxylate + H2O2 + NH4(+). It carries out the reaction D-serine + O2 + H2O = 3-hydroxypyruvate + H2O2 + NH4(+). The enzyme catalyses D-phenylalanine + O2 + H2O = 3-phenylpyruvate + H2O2 + NH4(+). The catalysed reaction is D-alanine + O2 + H2O = pyruvate + H2O2 + NH4(+). It catalyses the reaction D-arginine + O2 + H2O = 5-guanidino-2-oxopentanoate + H2O2 + NH4(+). It carries out the reaction D-methionine + O2 + H2O = 4-methylsulfanyl-2-oxobutanoate + H2O2 + NH4(+). The enzyme catalyses D-ornithine + O2 + H2O = 5-amino-2-oxopentanoate + H2O2 + NH4(+). The catalysed reaction is D-leucine + O2 + H2O = 4-methyl-2-oxopentanoate + H2O2 + NH4(+). It catalyses the reaction D-lysine + O2 + H2O = 6-amino-2-oxohexanoate + H2O2 + NH4(+). It carries out the reaction D-proline + O2 = 1-pyrroline-2-carboxylate + H2O2. The enzyme catalyses D-valine + O2 + H2O = 3-methyl-2-oxobutanoate + H2O2 + NH4(+). The catalysed reaction is D-histidine + O2 + H2O = 3-(imidazol-5-yl)pyruvate + H2O2 + NH4(+). Its function is as follows. Catalyzes the oxidative deamination of D-amino acids with broad substrate specificity. Has low in vitro and no in vivo activity on D-serine; primary D-serine degradation is performed by the D-serine dehydratase dsd. The sequence is that of D-amino-acid oxidase (ddo-1) from Dictyostelium discoideum (Social amoeba).